The sequence spans 232 residues: C4-dicarboxylate TRAP transporter small permease protein DctQ (232 aa).

4 consecutive transmembrane segments (helical) span residues glutamate 30 to methionine 50, isoleucine 58 to serine 78, leucine 103 to serine 123, and phenylalanine 167 to isoleucine 187.

The protein belongs to the TRAP transporter small permease family. The complex comprises the extracytoplasmic solute receptor protein DctP, and the two transmembrane proteins DctQ and DctM.

Its subcellular location is the cell inner membrane. Part of the tripartite ATP-independent periplasmic (TRAP) transport system DctPQM involved in C4-dicarboxylates uptake. The polypeptide is C4-dicarboxylate TRAP transporter small permease protein DctQ (Vibrio cholerae serotype O1 (strain ATCC 39315 / El Tor Inaba N16961)).